Consider the following 555-residue polypeptide: CCR4-NOT transcription complex subunit 6-like (555 aa).

Positions 1-152 (MRLIGMPKEK…SLYQDPDGTR (152 aa)) are required for interaction with CNOT1, CNOT3 and CNOT7. LRR repeat units follow at residues 57–78 (HLTA…IAKL), 80–101 (NLVY…LGNM), 103–125 (SLRE…GRLF), and 126–148 (QLQT…YQDP). Residues 158 to 555 (MLDNLAVHPE…VNGVHLPNRR (398 aa)) are nuclease domain. Glutamate 240 is a Mg(2+) binding site. Substrate is bound by residues glutamate 240, glutamate 276, histidine 360, and proline 365. Mg(2+) is bound at residue aspartate 410. The Proton donor/acceptor role is filled by aspartate 410. Positions 412, 479, and 484 each coordinate substrate.

This sequence belongs to the CCR4/nocturin family. Component of the CCR4-NOT complex; distinct complexes seem to exist that differ in the participation of probably mutually exclusive catalytic subunits; the complex contains two deadenylase subunits, CNOT6 or CNOT6L, and CNOT7 or CNOT8. Interacts with CNOT1, CNOT3, CNOT7, CNOT8 and CNOT9. Interacts with TOB1. Interacts with NANOS2. Interacts with ZFP36. Interacts with ZFP36L2. Interacts with RBM46. The cofactor is Mg(2+).

It localises to the cytoplasm. The protein localises to the nucleus. It carries out the reaction Exonucleolytic cleavage of poly(A) to 5'-AMP.. In terms of biological role, poly(A) nuclease with 3'-5' RNase activity. Catalytic component of the CCR4-NOT complex which is one of the major cellular mRNA deadenylases and is linked to various cellular processes including bulk mRNA degradation, miRNA-mediated repression, translational repression during translational initiation and general transcription regulation. Additional complex functions may be a consequence of its influence on mRNA expression. Involved in mRNA decay mediated by the major-protein-coding determinant of instability (mCRD) of the FOS gene in the cytoplasm. Involved in deadenylation-dependent degradation of CDKN1B mRNA. Its mRNA deadenylase activity can be inhibited by TOB1. Mediates cell proliferation and cell survival and prevents cellular senescence. This Mus musculus (Mouse) protein is CCR4-NOT transcription complex subunit 6-like (Cnot6l).